The primary structure comprises 301 residues: Putative glycosyltransferase MJ1113 (301 aa).

The next 8 helical transmembrane spans lie at 2–22 (GHYF…SAVL), 62–82 (FIPF…IIGI), 95–115 (LILL…NSYV), 117–137 (LIEI…TNML), 140–160 (FNGL…LVLF), 164–184 (YTTG…LLIF), 191–211 (VFPG…LAVV), and 280–300 (VTVL…ISLI).

This sequence belongs to the glycosyltransferase 4 family.

The protein resides in the cell membrane. The sequence is that of Putative glycosyltransferase MJ1113 from Methanocaldococcus jannaschii (strain ATCC 43067 / DSM 2661 / JAL-1 / JCM 10045 / NBRC 100440) (Methanococcus jannaschii).